The following is a 325-amino-acid chain: Transaldolase (325 aa).

The active-site Schiff-base intermediate with substrate is the Lys-125.

The protein belongs to the transaldolase family. Type 2 subfamily.

The protein localises to the cytoplasm. The catalysed reaction is D-sedoheptulose 7-phosphate + D-glyceraldehyde 3-phosphate = D-erythrose 4-phosphate + beta-D-fructose 6-phosphate. It functions in the pathway carbohydrate degradation; pentose phosphate pathway; D-glyceraldehyde 3-phosphate and beta-D-fructose 6-phosphate from D-ribose 5-phosphate and D-xylulose 5-phosphate (non-oxidative stage): step 2/3. Transaldolase is important for the balance of metabolites in the pentose-phosphate pathway. The polypeptide is Transaldolase (tal) (Campylobacter jejuni subsp. jejuni serotype O:2 (strain ATCC 700819 / NCTC 11168)).